A 419-amino-acid chain; its full sequence is Cytosine permease (419 aa).

The Cytoplasmic segment spans residues 1-19; that stretch reads MSQDNNFSQGPVPQSARKG. A helical membrane pass occupies residues 20–39; the sequence is VLALTFVMLGLTFFSASMWT. At 40-51 the chain is on the periplasmic side; sequence GGTLGTGLSYHD. A helical membrane pass occupies residues 52 to 71; it reads FFLAVLIGNLLLGIYTSFLG. The Cytoplasmic portion of the chain corresponds to 72 to 100; sequence YIGAKTGLTTHLLARFSFGVKGSWLPSLL. The chain crosses the membrane as a helical span at residues 101–120; the sequence is LGGTQVGWFGVGVAMFAIPV. Residues 121 to 127 lie on the Periplasmic side of the membrane; sequence GKATGLD. The chain crosses the membrane as a helical span at residues 128–147; it reads INLLIAVSGLLMTVTVFFGI. Residues 148–152 are Cytoplasmic-facing; the sequence is SALTV. The helical transmembrane segment at 153-172 threads the bilayer; that stretch reads LSVIAVPAIACLGGYSVWLA. Residues 173–192 are Periplasmic-facing; sequence VNGMGGLDALKAVVPAQPLD. A helical transmembrane segment spans residues 193-212; that stretch reads FNVALALVVGSFISAGTLTA. Topologically, residues 213 to 221 are cytoplasmic; sequence DFVRFGRNA. Residues 222 to 242 form a helical membrane-spanning segment; the sequence is KLAVLVAMVAFFLGNSLMFIF. At 243 to 257 the chain is on the periplasmic side; it reads GAAGAAALGMADISD. The chain crosses the membrane as a helical span at residues 258–277; sequence VMIAQGLLLPAIVVLGLNIW. Residues 278–300 lie on the Cytoplasmic side of the membrane; it reads TTNDNALYASGLGFANITGMSSK. The helical transmembrane segment at 301 to 320 threads the bilayer; sequence TLSVINGIIGTVCALWLYNN. Position 321 (Phe321) is a topological domain, periplasmic. The helical transmembrane segment at 322 to 341 threads the bilayer; the sequence is VGWLTFLSAAIPPVGGVIIA. Over 342–358 the chain is Cytoplasmic; that stretch reads DYLMNRRRYEHFATTRM. Residues 359 to 378 traverse the membrane as a helical segment; that stretch reads MSVNWVAILAVALGIAAGHW. Topologically, residues 379–380 are periplasmic; it reads LP. The helical transmembrane segment at 381-400 threads the bilayer; the sequence is GIVPVNAVLGGALSYLILNP. The Cytoplasmic portion of the chain corresponds to 401-419; that stretch reads ILNRKTTAAMTHVEANSVE.

Belongs to the purine-cytosine permease (2.A.39) family.

It is found in the cell inner membrane. Its function is as follows. Required for cytosine transport into the cell. This is Cytosine permease (codB) from Escherichia coli O6:H1 (strain CFT073 / ATCC 700928 / UPEC).